A 347-amino-acid chain; its full sequence is Ribosomal RNA large subunit methyltransferase M (347 aa).

Residues Ser-184, 217-220 (APGG), Asp-236, Asp-256, and Asp-272 each bind S-adenosyl-L-methionine. Lys-301 (proton acceptor) is an active-site residue.

It belongs to the class I-like SAM-binding methyltransferase superfamily. RNA methyltransferase RlmE family. RlmM subfamily. As to quaternary structure, monomer.

It localises to the cytoplasm. It catalyses the reaction cytidine(2498) in 23S rRNA + S-adenosyl-L-methionine = 2'-O-methylcytidine(2498) in 23S rRNA + S-adenosyl-L-homocysteine + H(+). In terms of biological role, catalyzes the 2'-O-methylation at nucleotide C2498 in 23S rRNA. The sequence is that of Ribosomal RNA large subunit methyltransferase M from Xanthomonas oryzae pv. oryzae (strain MAFF 311018).